Consider the following 513-residue polypeptide: ATP synthase subunit alpha, mitochondrial (513 aa).

170-177 contributes to the ATP binding site; the sequence is GDRQTGKT.

The protein belongs to the ATPase alpha/beta chains family. In terms of assembly, F-type ATPases have 2 components, CF(1) - the catalytic core - and CF(0) - the membrane proton channel. CF(1) has five subunits: alpha(3), beta(3), gamma(1), delta(1), epsilon(1). CF(0) has three main subunits: a, b and c.

Its subcellular location is the mitochondrion. It is found in the mitochondrion inner membrane. Mitochondrial membrane ATP synthase (F(1)F(0) ATP synthase or Complex V) produces ATP from ADP in the presence of a proton gradient across the membrane which is generated by electron transport complexes of the respiratory chain. F-type ATPases consist of two structural domains, F(1) - containing the extramembraneous catalytic core, and F(0) - containing the membrane proton channel, linked together by a central stalk and a peripheral stalk. During catalysis, ATP synthesis in the catalytic domain of F(1) is coupled via a rotary mechanism of the central stalk subunits to proton translocation. Subunits alpha and beta form the catalytic core in F(1). Rotation of the central stalk against the surrounding alpha(3)beta(3) subunits leads to hydrolysis of ATP in three separate catalytic sites on the beta subunits. Subunit alpha does not bear the catalytic high-affinity ATP-binding sites. This Marchantia polymorpha (Common liverwort) protein is ATP synthase subunit alpha, mitochondrial (ATPA).